The sequence spans 87 residues: Phosphoribosyl-ATP pyrophosphatase (87 aa).

The protein belongs to the PRA-PH family.

It localises to the cytoplasm. It catalyses the reaction 1-(5-phospho-beta-D-ribosyl)-ATP + H2O = 1-(5-phospho-beta-D-ribosyl)-5'-AMP + diphosphate + H(+). It participates in amino-acid biosynthesis; L-histidine biosynthesis; L-histidine from 5-phospho-alpha-D-ribose 1-diphosphate: step 2/9. The protein is Phosphoribosyl-ATP pyrophosphatase of Salinibacter ruber (strain DSM 13855 / M31).